The primary structure comprises 472 residues: Methanethiol oxidase (472 aa).

It belongs to the selenium-binding protein family.

The protein resides in the nucleus. The protein localises to the cytoplasm. It localises to the cytosol. Its subcellular location is the membrane. The catalysed reaction is methanethiol + O2 + H2O = hydrogen sulfide + formaldehyde + H2O2 + H(+). Its pathway is organosulfur degradation. In terms of biological role, catalyzes the oxidation of methanethiol, an organosulfur compound known to be produced in substantial amounts by gut bacteria. Selenium-binding protein which may be involved in the sensing of reactive xenobiotics in the cytoplasm. May be involved in intra-Golgi protein transport. The sequence is that of Methanethiol oxidase (selenbp1-a) from Xenopus laevis (African clawed frog).